A 154-amino-acid polypeptide reads, in one-letter code: Myoglobin (154 aa).

The region spanning G2–K148 is the Globin domain. S4 carries the phosphoserine modification. Position 65 (H65) interacts with nitrite. H65 is an O2 binding site. Position 68 is a phosphothreonine (T68). Heme b is bound at residue H94.

The protein belongs to the globin family. In terms of assembly, monomeric.

The protein resides in the cytoplasm. It is found in the sarcoplasm. The enzyme catalyses Fe(III)-heme b-[protein] + nitric oxide + H2O = Fe(II)-heme b-[protein] + nitrite + 2 H(+). It carries out the reaction H2O2 + AH2 = A + 2 H2O. In terms of biological role, monomeric heme protein which primary function is to store oxygen and facilitate its diffusion within muscle tissues. Reversibly binds oxygen through a pentacoordinated heme iron and enables its timely and efficient release as needed during periods of heightened demand. Depending on the oxidative conditions of tissues and cells, and in addition to its ability to bind oxygen, it also has a nitrite reductase activity whereby it regulates the production of bioactive nitric oxide. Under stress conditions, like hypoxia and anoxia, it also protects cells against reactive oxygen species thanks to its pseudoperoxidase activity. In Meles meles (Eurasian badger), this protein is Myoglobin (MB).